Reading from the N-terminus, the 35-residue chain is Coenzyme PQQ synthesis protein A (35 aa).

A cross-link (pyrroloquinoline quinone (Glu-Tyr)) is located at residues 16 to 20 (EINMY).

This sequence belongs to the PqqA family.

The protein operates within cofactor biosynthesis; pyrroloquinoline quinone biosynthesis. Its function is as follows. Required for coenzyme pyrroloquinoline quinone (PQQ) biosynthesis. PQQ is probably formed by cross-linking a specific glutamate to a specific tyrosine residue and excising these residues from the peptide. This chain is Coenzyme PQQ synthesis protein A, found in Ruegeria pomeroyi (strain ATCC 700808 / DSM 15171 / DSS-3) (Silicibacter pomeroyi).